A 428-amino-acid polypeptide reads, in one-letter code: MAKQKPVLNVAFIGHVDAGKSTTVGRLLYDSGAIDPQLLEKLKREAQERGKAGFEFAYVMDNLKEERERGVTIDVAHKKFETQKYEVTIVDCPGHRDFIKNMITGASQADAAVLVVDVNDAKTGIQPQTREHMFLARTLGIKQIAVAINKMDTVNYSQEEYEKMKKMLSEQLLKVLGYNPDQIDFIPTASLKGDNVVKRSENMPWYKGPTLVEALDKFQPPEKPTNLPLRIPIQDVYSITGVGTVPVGRVETGILRPGDKVVFEPAGVSGEVKSIEMHHEQIPQAEPGDNIGFNVRGVSKKDIKRGDVCGHPDNPPTVAEEFTAQIVVLQHPTAITVGYTPVFHAHTAQVACTFIELLKKLDPRTGQVIEENPQFLKTGDAAIVKIKPTKPMVIENVREIPQLGRFAIRDMGMTIAAGMAIDVKAKNK.

A tr-type G domain is found at 5-225 (KPVLNVAFIG…DKFQPPEKPT (221 aa)). The tract at residues 14–21 (GHVDAGKS) is G1. 14-21 (GHVDAGKS) is a binding site for GTP. Mg(2+) is bound at residue Ser21. The tract at residues 70–74 (GVTID) is G2. Positions 91 to 94 (DCPG) are G3. Residues 91–95 (DCPGH) and 149–152 (NKMD) each bind GTP. Residues 149 to 152 (NKMD) form a G4 region. Residues 189–191 (ASL) form a G5 region.

The protein belongs to the TRAFAC class translation factor GTPase superfamily. Classic translation factor GTPase family. EF-Tu/EF-1A subfamily.

The protein localises to the cytoplasm. The enzyme catalyses GTP + H2O = GDP + phosphate + H(+). Its function is as follows. GTP hydrolase that promotes the GTP-dependent binding of aminoacyl-tRNA to the A-site of ribosomes during protein biosynthesis. The chain is Elongation factor 1-alpha from Methanocaldococcus jannaschii (strain ATCC 43067 / DSM 2661 / JAL-1 / JCM 10045 / NBRC 100440) (Methanococcus jannaschii).